Here is a 119-residue protein sequence, read N- to C-terminus: Large ribosomal subunit protein uL18 (119 aa).

This sequence belongs to the universal ribosomal protein uL18 family. As to quaternary structure, part of the 50S ribosomal subunit; part of the 5S rRNA/L5/L18/L25 subcomplex. Contacts the 5S and 23S rRNAs.

Its function is as follows. This is one of the proteins that bind and probably mediate the attachment of the 5S RNA into the large ribosomal subunit, where it forms part of the central protuberance. This chain is Large ribosomal subunit protein uL18, found in Cupriavidus metallidurans (strain ATCC 43123 / DSM 2839 / NBRC 102507 / CH34) (Ralstonia metallidurans).